Reading from the N-terminus, the 268-residue chain is Ribosome maturation factor RimP (268 aa).

2 disordered regions span residues 1–41 (MGSA…GRGG) and 223–268 (LVEP…EMTR). Residues 32–41 (PSGSARGRGG) show a composition bias toward low complexity. The segment covering 248-257 (ESNDDGREAG) has biased composition (basic and acidic residues).

This sequence belongs to the RimP family.

It localises to the cytoplasm. Required for maturation of 30S ribosomal subunits. The chain is Ribosome maturation factor RimP from Frankia casuarinae (strain DSM 45818 / CECT 9043 / HFP020203 / CcI3).